Consider the following 166-residue polypeptide: Sec-independent protein translocase protein TatB (166 aa).

The chain crosses the membrane as a helical span at residues 2–22 (FNDIGALELLTLGVLAVLVFG). The segment at 110–166 (TPAASDTANSAVNGSAGAAADGVTTSLTKTGETTPDLLKKAPQQAQPERPPFDADAT) is disordered. Over residues 117–129 (ANSAVNGSAGAAA) the composition is skewed to low complexity. Positions 132–142 (VTTSLTKTGET) are enriched in polar residues.

Belongs to the TatB family. In terms of assembly, the Tat system comprises two distinct complexes: a TatABC complex, containing multiple copies of TatA, TatB and TatC subunits, and a separate TatA complex, containing only TatA subunits. Substrates initially bind to the TatABC complex, which probably triggers association of the separate TatA complex to form the active translocon.

The protein localises to the cell membrane. Part of the twin-arginine translocation (Tat) system that transports large folded proteins containing a characteristic twin-arginine motif in their signal peptide across membranes. Together with TatC, TatB is part of a receptor directly interacting with Tat signal peptides. TatB may form an oligomeric binding site that transiently accommodates folded Tat precursor proteins before their translocation. This is Sec-independent protein translocase protein TatB from Streptomyces griseus subsp. griseus (strain JCM 4626 / CBS 651.72 / NBRC 13350 / KCC S-0626 / ISP 5235).